The sequence spans 696 residues: GPI mannosyltransferase 4 (696 aa).

6 helical membrane passes run 100-120 (WQLE…IYTL), 125-142 (NDYC…RFEI), 149-169 (SSWI…EMAM), 185-205 (NTVV…ESIS), 227-247 (AMST…LFGA), and 338-358 (YVHL…ASLG).

This sequence belongs to the glycosyltransferase 22 family. PIGZ subfamily.

Its subcellular location is the endoplasmic reticulum membrane. It participates in glycolipid biosynthesis; glycosylphosphatidylinositol-anchor biosynthesis. In terms of biological role, mannosyltransferase involved in glycosylphosphatidylinositol-anchor biosynthesis. Transfers a fourth mannose to some trimannosyl-GPIs during GPI precursor assembly. The chain is GPI mannosyltransferase 4 from Drosophila melanogaster (Fruit fly).